Here is a 622-residue protein sequence, read N- to C-terminus: FERM domain-containing protein 6 (622 aa).

The FERM domain maps to 16-328; sequence RSVCIFLPND…NSHRLYMNLQ (313 aa). Positions 364–445 are disordered; sequence KRSRASGSSA…SGVESGGKDR (82 aa). Composition is skewed to low complexity over residues 384–395 and 425–438; these read HSTASHSSSHTS and SSMT…TSGV. Residue Ser522 is modified to Phosphoserine. Phosphothreonine is present on Thr523. Phosphoserine is present on residues Ser525, Ser542, and Ser544.

The protein localises to the cytoplasm. The protein resides in the cell membrane. This is FERM domain-containing protein 6 (FRMD6) from Homo sapiens (Human).